Consider the following 353-residue polypeptide: Polycomb group RING finger protein 6 (353 aa).

Residues 1–116 (MDEAETDATE…FSLRLESGRA (116 aa)) form a disordered region. The segment covering 9-19 (TENKRASEAKR) has biased composition (basic and acidic residues). Pro residues predominate over residues 23 to 39 (MPPPPPPPPPISPPALI). Phosphoserine is present on serine 34. Residues 40–52 (PAPAAGEEGPASL) show a composition bias toward low complexity. The segment covering 69–82 (EPERSLGRLRGRFE) has biased composition (basic and acidic residues). Positions 71-112 (ERSLGRLRGRFEDYDEELEEEEEMEEEEEEEEEMSHFSLRLE) form a coiled coil. Positions 83–103 (DYDEELEEEEEMEEEEEEEEE) are enriched in acidic residues. Position 118 is a phosphoserine (serine 118). Residues 137–176 (CSICKGYLIDATTITECLHTFCKSCIVRHFYYSNRCPKCN) form an RING-type zinc finger. Glycyl lysine isopeptide (Lys-Gly) (interchain with G-Cter in SUMO2) cross-links involve residues lysine 226 and lysine 237.

As to quaternary structure, component of a PRC1-like complex. Interacts with BMI1/PCGF4, RING1 and RNF2. Interacts with KDM5D. Interacts with CBX4, CBX6, CBX7 and CBX8. In terms of processing, phosphorylated during mitosis. Expressed in ovary, testis, stomach, liver, thymus and kidney (at protein level).

It is found in the nucleus. In terms of biological role, transcriptional repressor. May modulate the levels of histone H3K4Me3 by activating KDM5D histone demethylase. Component of a Polycomb group (PcG) multiprotein PRC1-like complex, a complex class required to maintain the transcriptionally repressive state of many genes, including Hox genes, throughout development. PcG PRC1 complex acts via chromatin remodeling and modification of histones; it mediates monoubiquitination of histone H2A 'Lys-119', rendering chromatin heritably changed in its expressibility. Within the PRC1-like complex, regulates RNF2 ubiquitin ligase activity. This Mus musculus (Mouse) protein is Polycomb group RING finger protein 6 (Pcgf6).